The chain runs to 778 residues: Serine/threonine-protein kinase BRSK1 (778 aa).

Over residues 1–12 the composition is skewed to gly residues; that stretch reads MSSGSKEGGGGS. Residues 1-29 form a disordered region; sequence MSSGSKEGGGGSPAYHLPHPHPHPPQHAQ. Residues 34–285 enclose the Protein kinase domain; that stretch reads YRLEKTLGKG…LEQIQKHPWY (252 aa). ATP contacts are provided by residues 40–48 and lysine 63; that span reads LGKGQTGLV. Aspartate 156 functions as the Proton acceptor in the catalytic mechanism. At threonine 189 the chain carries Phosphothreonine; by LKB1. Residues 314–356 form the UBA domain; the sequence is ELDPDVLESMASLGCFRDRERLHRELRSEEENQEKMIYYLLLD. The span at 362 to 383 shows a compositional bias: basic and acidic residues; sequence PSCEDQDLPPRNDVDPPRKRVD. Positions 362–548 are disordered; that stretch reads PSCEDQDLPP…SPGGGVGGAA (187 aa). 4 positions are modified to phosphoserine: serine 399, serine 443, serine 447, and serine 450. Over residues 430–457 the composition is skewed to low complexity; sequence SRSVSGASTGLSSSPLSSPRSPVFSFSP. Omega-N-methylarginine occurs at positions 466, 481, 484, and 498. A compositionally biased stretch (pro residues) spans 491-508; that stretch reads QPPPPSARSTPLPGPPGS. Serine 508 is modified (phosphoserine). A compositionally biased stretch (low complexity) spans 509 to 533; it reads PRSSGGTPLHSPLHTPRASPTGTPG. Arginine 525 carries the post-translational modification Omega-N-methylarginine. 2 positions are modified to phosphothreonine: threonine 529 and threonine 535. An Omega-N-methylarginine modification is found at arginine 550. The interval 560 to 588 is disordered; that stretch reads FLGSPRFHRRKMQVPTAEEMSSLTPESSP. Threonine 583 carries the phosphothreonine modification. A phosphoserine mark is found at serine 586, serine 587, and serine 601. The disordered stretch occupies residues 719-778; sequence QPSVQALADEKNGAQTRPAGTPPRSLQPPPGRSDPDLSSSPRRGPPKDKKLLATNGTPLP.

It belongs to the protein kinase superfamily. CAMK Ser/Thr protein kinase family. SNF1 subfamily. Mg(2+) is required as a cofactor. Post-translationally, phosphorylated at Thr-189 by STK11/LKB1 in complex with STE20-related adapter-alpha (STRADA) pseudo kinase and CAB39. Not phosphorylated at Thr-189 by CaMKK2. In contrast, it is phosphorylated and activated by CaMKK1. May be inactivated via dephosphorylation of Thr-189 by PP2C. In terms of tissue distribution, present in the gray matter of the brain and spinal cord (at protein level). Expressed in the nervous system, distributed within the brain and spinal cord of embryonic and postnatal animals.

The protein resides in the cytoplasm. It localises to the nucleus. The protein localises to the cytoskeleton. Its subcellular location is the microtubule organizing center. It is found in the centrosome. The protein resides in the synapse. It localises to the presynaptic active zone. The protein localises to the cytoplasmic vesicle. Its subcellular location is the secretory vesicle. It is found in the synaptic vesicle. The enzyme catalyses L-seryl-[protein] + ATP = O-phospho-L-seryl-[protein] + ADP + H(+). The catalysed reaction is L-threonyl-[protein] + ATP = O-phospho-L-threonyl-[protein] + ADP + H(+). It carries out the reaction L-seryl-[tau protein] + ATP = O-phospho-L-seryl-[tau protein] + ADP + H(+). It catalyses the reaction L-threonyl-[tau protein] + ATP = O-phospho-L-threonyl-[tau protein] + ADP + H(+). Activated by phosphorylation on Thr-189 by STK11/LKB1. In terms of biological role, serine/threonine-protein kinase that plays a key role in polarization of neurons and centrosome duplication. Phosphorylates CDC25B, CDC25C, MAPT/TAU, RIMS1, TUBG1, TUBG2 and WEE1. Following phosphorylation and activation by STK11/LKB1, acts as a key regulator of polarization of cortical neurons, probably by mediating phosphorylation of microtubule-associated proteins such as MAPT/TAU at 'Thr-504' and 'Ser-554'. Also regulates neuron polarization by mediating phosphorylation of WEE1 at 'Ser-642' in postmitotic neurons, leading to down-regulate WEE1 activity in polarized neurons. In neurons, localizes to synaptic vesicles and plays a role in neurotransmitter release, possibly by phosphorylating RIMS1. Also acts as a positive regulator of centrosome duplication by mediating phosphorylation of gamma-tubulin (TUBG1 and TUBG2) at 'Ser-131', leading to translocation of gamma-tubulin and its associated proteins to the centrosome. Involved in the UV-induced DNA damage checkpoint response, probably by inhibiting CDK1 activity through phosphorylation and activation of WEE1, and inhibition of CDC25B and CDC25C. This chain is Serine/threonine-protein kinase BRSK1 (Brsk1), found in Mus musculus (Mouse).